The primary structure comprises 26 residues: Acyl carrier protein (26 aa).

In terms of domain architecture, Carrier spans 2–26 (SDIEQRIKQAVAEQLGMRAEEIKNE).

It belongs to the acyl carrier protein (ACP) family. Post-translationally, 4'-phosphopantetheine is transferred from CoA to a specific serine of apo-ACP by AcpS. This modification is essential for activity because fatty acids are bound in thioester linkage to the sulfhydryl of the prosthetic group.

It localises to the cytoplasm. The protein operates within lipid metabolism; fatty acid biosynthesis. Carrier of the growing fatty acid chain in fatty acid biosynthesis. The chain is Acyl carrier protein (acpP) from Acinetobacter calcoaceticus.